The following is a 570-amino-acid chain: Protein NRT1/ PTR FAMILY 8.1 (570 aa).

Phosphothreonine is present on threonine 98. 10 helical membrane-spanning segments follow: residues 99-119 (IATF…SASV), 140-160 (AVFF…KPCV), 182-202 (FFNW…TVLV), 210-230 (WGWG…FFFF), 329-349 (IITL…YSQM), 377-397 (LFDT…IIPL), 414-434 (MGIG…LEVV), 454-474 (IFWQ…TFIG), 494-514 (LSLT…TVVM), and 537-557 (YFFY…LWIS).

This sequence belongs to the major facilitator superfamily. Proton-dependent oligopeptide transporter (POT/PTR) (TC 2.A.17) family. In terms of tissue distribution, expressed in cotyledons, hypocotyls, leaves, roots, flowers, pistils and vascular tissue of sepals, anthers, carpels and funiculi. Not detected in seeds.

Its subcellular location is the cell membrane. Its function is as follows. Peptide transporter. Mediates the transport of di- and tripeptides. High affinity transporter with low selectivity. No transport of amino acids. In Arabidopsis thaliana (Mouse-ear cress), this protein is Protein NRT1/ PTR FAMILY 8.1 (NPF8.1).